Here is a 226-residue protein sequence, read N- to C-terminus: 2-C-methyl-D-erythritol 4-phosphate cytidylyltransferase (226 aa).

It belongs to the IspD/TarI cytidylyltransferase family. IspD subfamily.

It catalyses the reaction 2-C-methyl-D-erythritol 4-phosphate + CTP + H(+) = 4-CDP-2-C-methyl-D-erythritol + diphosphate. The protein operates within isoprenoid biosynthesis; isopentenyl diphosphate biosynthesis via DXP pathway; isopentenyl diphosphate from 1-deoxy-D-xylulose 5-phosphate: step 2/6. In terms of biological role, catalyzes the formation of 4-diphosphocytidyl-2-C-methyl-D-erythritol from CTP and 2-C-methyl-D-erythritol 4-phosphate (MEP). This Rhodococcus opacus (strain B4) protein is 2-C-methyl-D-erythritol 4-phosphate cytidylyltransferase.